The chain runs to 414 residues: 2,3-diketo-5-methylthiopentyl-1-phosphate enolase (414 aa).

The active-site Proton acceptor is the lysine 99. Residues lysine 148, 174 to 177 (KDDE), histidine 265, glycine 338, and 360 to 361 (GG) contribute to the substrate site. Mg(2+)-binding residues include lysine 174, aspartate 176, and glutamate 177. At lysine 174 the chain carries N6-carboxylysine.

It belongs to the RuBisCO large chain family. Type IV subfamily. Homodimer. The cofactor is Mg(2+).

It catalyses the reaction 5-methylsulfanyl-2,3-dioxopentyl phosphate = 2-hydroxy-5-methylsulfanyl-3-oxopent-1-enyl phosphate. Its pathway is amino-acid biosynthesis; L-methionine biosynthesis via salvage pathway; L-methionine from S-methyl-5-thio-alpha-D-ribose 1-phosphate: step 3/6. Its function is as follows. Catalyzes the enolization of 2,3-diketo-5-methylthiopentyl-1-phosphate (DK-MTP-1-P) into 2-hydroxy-3-keto-5-methylthiopentenyl-1-phosphate (HK-MTPenyl-1-P). This is 2,3-diketo-5-methylthiopentyl-1-phosphate enolase from Bacillus anthracis (strain CDC 684 / NRRL 3495).